Here is a 681-residue protein sequence, read N- to C-terminus: DNA ligase (681 aa).

Residues 42-46 (DAEYD), 91-92 (SL), and Glu-120 contribute to the NAD(+) site. Lys-122 (N6-AMP-lysine intermediate) is an active-site residue. Residues Arg-143, Glu-180, Lys-302, and Lys-326 each coordinate NAD(+). Zn(2+)-binding residues include Cys-420, Cys-423, Cys-438, and Cys-444. The BRCT domain occupies 603–681 (ADAQPLLGQT…EAGLIELIGL (79 aa)).

This sequence belongs to the NAD-dependent DNA ligase family. LigA subfamily. Requires Mg(2+) as cofactor. The cofactor is Mn(2+).

It carries out the reaction NAD(+) + (deoxyribonucleotide)n-3'-hydroxyl + 5'-phospho-(deoxyribonucleotide)m = (deoxyribonucleotide)n+m + AMP + beta-nicotinamide D-nucleotide.. In terms of biological role, DNA ligase that catalyzes the formation of phosphodiester linkages between 5'-phosphoryl and 3'-hydroxyl groups in double-stranded DNA using NAD as a coenzyme and as the energy source for the reaction. It is essential for DNA replication and repair of damaged DNA. In Shewanella amazonensis (strain ATCC BAA-1098 / SB2B), this protein is DNA ligase.